The sequence spans 229 residues: Orotidine 5'-phosphate decarboxylase (229 aa).

Substrate-binding positions include D11, K33, 61–70 (DMKLFDISAT), T116, R179, Q188, G208, and R209. The active-site Proton donor is the K63.

The protein belongs to the OMP decarboxylase family. Type 1 subfamily. Homodimer.

It catalyses the reaction orotidine 5'-phosphate + H(+) = UMP + CO2. It participates in pyrimidine metabolism; UMP biosynthesis via de novo pathway; UMP from orotate: step 2/2. Functionally, catalyzes the decarboxylation of orotidine 5'-monophosphate (OMP) to uridine 5'-monophosphate (UMP). This Jannaschia sp. (strain CCS1) protein is Orotidine 5'-phosphate decarboxylase.